A 176-amino-acid polypeptide reads, in one-letter code: NAD(P)H-quinone oxidoreductase subunit 6, chloroplastic (176 aa).

The next 5 helical transmembrane spans lie at phenylalanine 10–proline 30, proline 32–leucine 52, alanine 61–methionine 81, leucine 92–leucine 112, and phenylalanine 152–serine 172.

It belongs to the complex I subunit 6 family. In terms of assembly, NDH is composed of at least 16 different subunits, 5 of which are encoded in the nucleus.

It localises to the plastid. It is found in the chloroplast thylakoid membrane. It catalyses the reaction a plastoquinone + NADH + (n+1) H(+)(in) = a plastoquinol + NAD(+) + n H(+)(out). The catalysed reaction is a plastoquinone + NADPH + (n+1) H(+)(in) = a plastoquinol + NADP(+) + n H(+)(out). NDH shuttles electrons from NAD(P)H:plastoquinone, via FMN and iron-sulfur (Fe-S) centers, to quinones in the photosynthetic chain and possibly in a chloroplast respiratory chain. The immediate electron acceptor for the enzyme in this species is believed to be plastoquinone. Couples the redox reaction to proton translocation, and thus conserves the redox energy in a proton gradient. The polypeptide is NAD(P)H-quinone oxidoreductase subunit 6, chloroplastic (ndhG) (Lepidium virginicum (Virginia pepperweed)).